The sequence spans 864 residues: DNA mismatch repair protein MutS (864 aa).

607-614 (GPNMGGKS) is a binding site for ATP.

Belongs to the DNA mismatch repair MutS family.

Functionally, this protein is involved in the repair of mismatches in DNA. It is possible that it carries out the mismatch recognition step. This protein has a weak ATPase activity. In Neisseria meningitidis serogroup C / serotype 2a (strain ATCC 700532 / DSM 15464 / FAM18), this protein is DNA mismatch repair protein MutS.